The sequence spans 464 residues: Lysosomal proton-coupled steroid conjugate and bile acid symporter SLC46A3 (464 aa).

A signal peptide spans 1-26 (MRKVLLVEPVIFIYIFASSLTSPVVQ). Topologically, residues 27–71 (QFIYRKLWEEEYNSTAISSDNSSHCERNKSSPTYVMEKAIQEKTS) are extracellular. Residues Asn-39, Asn-47, and Asn-54 are each glycosylated (N-linked (GlcNAc...) asparagine). The chain crosses the membrane as a helical span at residues 72–92 (FFNMQLDLTGAVPSLIVAFII). The Cytoplasmic segment spans residues 93–104 (VANGDHQGRKKS). The helical transmembrane segment at 105-125 (LVLPSIGALIADIFLTIVSYF) threads the bilayer. Residues 126 to 130 (SWPTS) lie on the Extracellular side of the membrane. A helical membrane pass occupies residues 131 to 151 (VLFLATFISGLFGSMATFLGG). Residues 152 to 171 (GFAYIADQCHDEKQKTTRIA) lie on the Cytoplasmic side of the membrane. Residues 172–192 (VIDLIFGVVSGLAGLSSGYFL) traverse the membrane as a helical segment. The Extracellular portion of the chain corresponds to 193–198 (REMGFT). Residues 199–219 (WTFATASLLHVVNIIYITFFL) form a helical membrane-spanning segment. Residues 220 to 259 (QDTVHISEFQQQAPLSYKEHLKETFSGVYMLFKTAPSKKR) lie on the Cytoplasmic side of the membrane. A helical transmembrane segment spans residues 260–280 (ILIIVLLFIFMTYLFTMFGGS). The Extracellular portion of the chain corresponds to 281–296 (SLFTLYELDEPLCWTE). Residues 297-317 (VYIGYGAAAFTSISLTSFLGV) traverse the membrane as a helical segment. Residues 318-326 (YLFSKCLKD) lie on the Cytoplasmic side of the membrane. A helical membrane pass occupies residues 327–347 (IYIVFIGIFSYIGGIVMAAFA). At 348–349 (KT) the chain is on the extracellular side. The chain crosses the membrane as a helical span at residues 350–370 (TLLMFLVRVPSLFSIMPIPVL). The Cytoplasmic segment spans residues 371–384 (RSMLSKVVLPSEQG). Residues 385-405 (AVFACIACLEVLTGTISLSVF) traverse the membrane as a helical segment. Residues 406-418 (NVIYAATVAWFSG) lie on the Extracellular side of the membrane. Residues 419–439 (FSFLLSASLCLIPLGVLCWLL) traverse the membrane as a helical segment. Residues 440-464 (CTSWNGEDLALLVPEEVSSIDSVDS) are Cytoplasmic-facing.

Belongs to the major facilitator superfamily. SLC46A family.

It localises to the lysosome membrane. It carries out the reaction estrone 3-sulfate(out) + n H(+)(out) = estrone 3-sulfate(in) + n H(+)(in). The catalysed reaction is 25-hydroxyvitamin D3 sulfate(out) + n H(+)(out) = 25-hydroxyvitamin D3 sulfate(in) + n H(+)(in). It catalyses the reaction cholate(out) + n H(+)(out) = cholate(in) + n H(+)(in). The enzyme catalyses glycocholate(out) + n H(+)(out) = glycocholate(in) + n H(+)(in). It carries out the reaction taurocholate(out) + n H(+)(out) = taurocholate(in) + n H(+)(in). The catalysed reaction is dehydroepiandrosterone 3-sulfate(out) + n H(+)(out) = dehydroepiandrosterone 3-sulfate(in) + n H(+)(in). Lysosomal proton-coupled steroid conjugate and bile acid transporter. Preferentially recognizes lipophilic steroid conjugates or bile acis as endogenous substrates and seems to mediate escape from lysosomes to the cytoplasm. Modulates hepatic cytosolic copper homeostasis, maybe acting as a lysosomal copper transporter and sequestering copper ions in the lysosome. This Gallus gallus (Chicken) protein is Lysosomal proton-coupled steroid conjugate and bile acid symporter SLC46A3 (SLC46A3).